A 425-amino-acid polypeptide reads, in one-letter code: Serine--tRNA ligase (425 aa).

230–232 (TSE) contributes to the L-serine binding site. Residue 261–263 (RKE) participates in ATP binding. Position 284 (Glu-284) interacts with L-serine. 348–351 (EISS) is a binding site for ATP. An L-serine-binding site is contributed by Ser-385.

This sequence belongs to the class-II aminoacyl-tRNA synthetase family. Type-1 seryl-tRNA synthetase subfamily. In terms of assembly, homodimer. The tRNA molecule binds across the dimer.

It localises to the cytoplasm. It carries out the reaction tRNA(Ser) + L-serine + ATP = L-seryl-tRNA(Ser) + AMP + diphosphate + H(+). It catalyses the reaction tRNA(Sec) + L-serine + ATP = L-seryl-tRNA(Sec) + AMP + diphosphate + H(+). The protein operates within aminoacyl-tRNA biosynthesis; selenocysteinyl-tRNA(Sec) biosynthesis; L-seryl-tRNA(Sec) from L-serine and tRNA(Sec): step 1/1. Functionally, catalyzes the attachment of serine to tRNA(Ser). Is also able to aminoacylate tRNA(Sec) with serine, to form the misacylated tRNA L-seryl-tRNA(Sec), which will be further converted into selenocysteinyl-tRNA(Sec). The polypeptide is Serine--tRNA ligase (Wolbachia pipientis wMel).